A 124-amino-acid polypeptide reads, in one-letter code: Phosphoribosyl-AMP cyclohydrolase (124 aa).

Position 82 (D82) interacts with Mg(2+). C83 lines the Zn(2+) pocket. Mg(2+) is bound by residues D84 and D86. Residues C99 and C106 each contribute to the Zn(2+) site.

This sequence belongs to the PRA-CH family. Homodimer. Mg(2+) serves as cofactor. It depends on Zn(2+) as a cofactor.

It is found in the cytoplasm. It carries out the reaction 1-(5-phospho-beta-D-ribosyl)-5'-AMP + H2O = 1-(5-phospho-beta-D-ribosyl)-5-[(5-phospho-beta-D-ribosylamino)methylideneamino]imidazole-4-carboxamide. It functions in the pathway amino-acid biosynthesis; L-histidine biosynthesis; L-histidine from 5-phospho-alpha-D-ribose 1-diphosphate: step 3/9. Functionally, catalyzes the hydrolysis of the adenine ring of phosphoribosyl-AMP. The chain is Phosphoribosyl-AMP cyclohydrolase from Rhizorhabdus wittichii (strain DSM 6014 / CCUG 31198 / JCM 15750 / NBRC 105917 / EY 4224 / RW1) (Sphingomonas wittichii).